The sequence spans 236 residues: Leucyl/phenylalanyl-tRNA--protein transferase (236 aa).

Belongs to the L/F-transferase family.

It is found in the cytoplasm. It carries out the reaction N-terminal L-lysyl-[protein] + L-leucyl-tRNA(Leu) = N-terminal L-leucyl-L-lysyl-[protein] + tRNA(Leu) + H(+). The enzyme catalyses N-terminal L-arginyl-[protein] + L-leucyl-tRNA(Leu) = N-terminal L-leucyl-L-arginyl-[protein] + tRNA(Leu) + H(+). It catalyses the reaction L-phenylalanyl-tRNA(Phe) + an N-terminal L-alpha-aminoacyl-[protein] = an N-terminal L-phenylalanyl-L-alpha-aminoacyl-[protein] + tRNA(Phe). Its function is as follows. Functions in the N-end rule pathway of protein degradation where it conjugates Leu, Phe and, less efficiently, Met from aminoacyl-tRNAs to the N-termini of proteins containing an N-terminal arginine or lysine. The sequence is that of Leucyl/phenylalanyl-tRNA--protein transferase from Shewanella halifaxensis (strain HAW-EB4).